A 380-amino-acid chain; its full sequence is 1-deoxy-D-xylulose 5-phosphate reductoisomerase (380 aa).

Positions 10, 11, 12, 13, 36, 37, 38, and 120 each coordinate NADPH. Lys121 contributes to the 1-deoxy-D-xylulose 5-phosphate binding site. Glu122 provides a ligand contact to NADPH. Asp146 is a Mn(2+) binding site. Positions 147, 148, 172, and 195 each coordinate 1-deoxy-D-xylulose 5-phosphate. Glu148 is a binding site for Mn(2+). NADPH is bound at residue Gly201. 1-deoxy-D-xylulose 5-phosphate contacts are provided by Ser208, Asn213, Lys214, and Glu217. Position 217 (Glu217) interacts with Mn(2+).

The protein belongs to the DXR family. Requires Mg(2+) as cofactor. It depends on Mn(2+) as a cofactor.

The catalysed reaction is 2-C-methyl-D-erythritol 4-phosphate + NADP(+) = 1-deoxy-D-xylulose 5-phosphate + NADPH + H(+). It participates in isoprenoid biosynthesis; isopentenyl diphosphate biosynthesis via DXP pathway; isopentenyl diphosphate from 1-deoxy-D-xylulose 5-phosphate: step 1/6. In terms of biological role, catalyzes the NADPH-dependent rearrangement and reduction of 1-deoxy-D-xylulose-5-phosphate (DXP) to 2-C-methyl-D-erythritol 4-phosphate (MEP). The chain is 1-deoxy-D-xylulose 5-phosphate reductoisomerase from Listeria monocytogenes serotype 4a (strain HCC23).